The primary structure comprises 223 residues: MHLSGDDVIVWQYGVVKLNQTIVMTWVIMVFLAGGSAFLTRRLSSGIRISRWQSFLEMIVTMAMQQIREIGLRQPEKYLSYLATLFLFVATAVLFTIIPGYEPPTGSLSTTAALALSVFVAVPLYGIERVGFGAYLKSYMKPTFIMLPFNIISEFSRTLALAVRLFGNMMSGVMIIGILLGIAPLFFPVLMSVLGLLTGMVQAYIFSMLATVYIAAATKSRDE.

5 helical membrane-spanning segments follow: residues 20–40 (QTIVMTWVIMVFLAGGSAFLT), 78–98 (YLSYLATLFLFVATAVLFTII), 107–127 (SLSTTAALALSVFVAVPLYGI), 173–193 (VMIIGILLGIAPLFFPVLMSV), and 194–214 (LGLLTGMVQAYIFSMLATVYI).

Belongs to the ATPase A chain family. F-type ATPases have 2 components, CF(1) - the catalytic core - and CF(0) - the membrane proton channel. CF(1) has five subunits: alpha(3), beta(3), gamma(1), delta(1), epsilon(1). CF(0) has four main subunits: a, b, b' and c.

It localises to the cell inner membrane. Its function is as follows. Key component of the proton channel; it plays a direct role in the translocation of protons across the membrane. In Prosthecochloris aestuarii (strain DSM 271 / SK 413), this protein is ATP synthase subunit a 1.